A 244-amino-acid chain; its full sequence is Ribosomal RNA small subunit methyltransferase NEP1 (244 aa).

The tract at residues 1–33 (MSAASGGFQPRERRFSVQEQDWETTPPKKLRLG) is disordered. Phosphoserine is present on residues Ser5 and Ser16. S-adenosyl-L-methionine-binding positions include Thr176, Gly201, Gly206, and 219-224 (ISNYPL).

This sequence belongs to the class IV-like SAM-binding methyltransferase superfamily. RNA methyltransferase NEP1 family. In terms of assembly, homodimer. Part of the small subunit (SSU) processome, composed of more than 70 proteins and the RNA chaperone small nucleolar RNA (snoRNA) U3.

It is found in the nucleus. The protein localises to the nucleolus. The catalysed reaction is pseudouridine(1248) in human 18S rRNA + S-adenosyl-L-methionine = N(1)-methylpseudouridine(1248) in human 18S rRNA + S-adenosyl-L-homocysteine + H(+). S-adenosyl-L-methionine-dependent pseudouridine N(1)-methyltransferase that methylates pseudouridine at position in 18S rRNA. Involved the biosynthesis of the hypermodified N1-methyl-N3-(3-amino-3-carboxypropyl) pseudouridine (m1acp3-Psi) conserved in eukaryotic 18S rRNA. Is not able to methylate uridine at this position. Also has an essential role in 40S ribosomal subunit biogenesis independent on its methyltransferase activity, facilitating the incorporation of ribosomal protein S19 during the formation of pre-ribosomes. Part of the small subunit (SSU) processome, first precursor of the small eukaryotic ribosomal subunit. During the assembly of the SSU processome in the nucleolus, many ribosome biogenesis factors, an RNA chaperone and ribosomal proteins associate with the nascent pre-rRNA and work in concert to generate RNA folding, modifications, rearrangements and cleavage as well as targeted degradation of pre-ribosomal RNA by the RNA exosome. This Mus musculus (Mouse) protein is Ribosomal RNA small subunit methyltransferase NEP1.